We begin with the raw amino-acid sequence, 103 residues long: Large ribosomal subunit protein bL21 (103 aa).

It belongs to the bacterial ribosomal protein bL21 family. As to quaternary structure, part of the 50S ribosomal subunit. Contacts protein L20.

Its function is as follows. This protein binds to 23S rRNA in the presence of protein L20. The protein is Large ribosomal subunit protein bL21 of Bordetella parapertussis (strain 12822 / ATCC BAA-587 / NCTC 13253).